A 269-amino-acid chain; its full sequence is Indole-3-glycerol phosphate synthase 1 (269 aa).

Belongs to the TrpC family.

It catalyses the reaction 1-(2-carboxyphenylamino)-1-deoxy-D-ribulose 5-phosphate + H(+) = (1S,2R)-1-C-(indol-3-yl)glycerol 3-phosphate + CO2 + H2O. The protein operates within amino-acid biosynthesis; L-tryptophan biosynthesis; L-tryptophan from chorismate: step 4/5. The sequence is that of Indole-3-glycerol phosphate synthase 1 (trpC1) from Streptomyces coelicolor (strain ATCC BAA-471 / A3(2) / M145).